Reading from the N-terminus, the 273-residue chain is Large ribosomal subunit protein uL2 (273 aa).

Positions 221 to 273 are disordered; it reads RGTAMNPVDHPHGGGEGRNFGKHPVSPWGVQTKGKKTRHNKRTDKYIVRRRGK. Basic residues predominate over residues 253-273; sequence KGKKTRHNKRTDKYIVRRRGK.

The protein belongs to the universal ribosomal protein uL2 family. Part of the 50S ribosomal subunit. Forms a bridge to the 30S subunit in the 70S ribosome.

One of the primary rRNA binding proteins. Required for association of the 30S and 50S subunits to form the 70S ribosome, for tRNA binding and peptide bond formation. It has been suggested to have peptidyltransferase activity; this is somewhat controversial. Makes several contacts with the 16S rRNA in the 70S ribosome. In Mannheimia succiniciproducens (strain KCTC 0769BP / MBEL55E), this protein is Large ribosomal subunit protein uL2.